A 525-amino-acid polypeptide reads, in one-letter code: Nuclear polyadenylated RNA-binding protein NAB2 (525 aa).

Disordered regions lie at residues 102 to 160 (SDIA…QLQP) and 196 to 236 (QFAP…STRF). Residues 103–160 (DIAQQQQQQQQQQQPDIAQQQPQQQPQQQPQQQPQQQPQQQPQQQPQQQPQQQPQLQP) are compositionally biased toward low complexity. 9 repeat units span residues 121–124 (QQQP), 125–128 (QQQP), 129–132 (QQQP), 133–136 (QQQP), 137–140 (QQQP), 141–144 (QQQP), 145–148 (QQQP), 149–152 (QQQP), and 153–156 (QQQP). A 10 X 4 AA tandem repeats of Q-Q-Q-P region spans residues 121 to 156 (QQQPQQQPQQQPQQQPQQQPQQQPQQQPQQQPQQQP). The stretch at 157 to 160 (QLQP) is one 10; approximate repeat. Omega-N-methylarginine occurs at positions 209 and 222. Residues 209 to 228 (RGGGAVGKNRRGGRGGNRGG) are RNA-binding RGG-box. Residues 209 to 239 (RGGGAVGKNRRGGRGGNRGGRNNNSTRFNPL) are PY-NLS nuclear localization signal. A Phosphothreonine modification is found at T254. 7 consecutive C3H1-type zinc fingers follow at residues 262–278 (CRLFPHCPLGRSCPHAH), 283–300 (CNEYPNCPKPPGTCEFLH), 340–355 (CKFGALCSNPSCPFGH), 371–386 (CDKNLTCDNPECRKAH), 415–430 (CKFGTHCTNKRCKYRH), 437–452 (CREGANCTRIDCLFGH), and 458–473 (CRFGVNCKNIYCLFRH). Positions 503-525 (NAIIENAPPQTSFTHQEQDTEMN) are disordered. Residues 510–525 (PPQTSFTHQEQDTEMN) show a composition bias toward polar residues.

It belongs to the ZC3H14 family. In terms of assembly, interacts with MLP1. Interacts with PUB1. In terms of processing, methylated by HMT1.

Its subcellular location is the nucleus. It localises to the cytoplasm. RNA-binding protein involved in RNA processing and transcription regulation. Acts as a regulator of mRNA stability: binds the poly(A) tail of mRNAs and pre-mRNAs, preventing their degradation by the exosome. Involved in the biogenesis of circular RNAs (circRNAs) which are produced by back-splicing circularization of pre-mRNAs. Involved in mRNA poly(A) tail length control and nuclear export. Functions in surveillance and the packaging leading to generation of export-competent mRNPs. Controls both mRNP compaction that facilitates movement through nuclear pore complexes and the length of transcript poly(A) tails. Also acts as a regulator of transcription. Associates directly with nascent RNA polymerase II transcripts and remains associated during subsequent nuclear RNA processing reactions. Required for RNA polymerase III (RNAPIII) transcription: required for the occupancy of RNAPIII and Transcription factor IIIB (TFIIIB) at target genes, possibly via direct association with nascent RNAPIII transcripts. In Saccharomyces cerevisiae (strain ATCC 204508 / S288c) (Baker's yeast), this protein is Nuclear polyadenylated RNA-binding protein NAB2.